Reading from the N-terminus, the 112-residue chain is DNA-binding protein TK1278 (112 aa).

Belongs to the PDCD5 family.

This chain is DNA-binding protein TK1278, found in Thermococcus kodakarensis (strain ATCC BAA-918 / JCM 12380 / KOD1) (Pyrococcus kodakaraensis (strain KOD1)).